Consider the following 1775-residue polypeptide: Internalin I (1775 aa).

Residues 1–28 form the signal peptide; sequence MKKKFSIVIISVLLLGYLAPFDTLLVGA. Residues 36-50 show a composition bias toward low complexity; it reads DTTVKTAETETATEA. The disordered stretch occupies residues 36–97; sequence DTTVKTAETE…SNIKTEINTD (62 aa). Over residues 58–85 the composition is skewed to basic and acidic residues; the sequence is DNEKAEEPKEAEASKETTEKEEKAKTKE. 27 LRR repeats span residues 152–176, 180–201, 202–224, 225–247, 248–269, 274–295, 296–318, 319–341, 342–364, 365–386, 387–409, 410–431, 432–453, 454–475, 476–497, 498–519, 520–541, 542–563, 564–585, 586–607, 608–629, 630–650, 654–675, 682–704, 705–726, 727–748, and 749–770; these read AISQ…EGLQ, NLTS…KDLV, NLVS…EGLV, NLQE…AALP, VLKE…NPAG, ELET…AKLP, KLKN…KGAT, KLQL…SGLS, ELEM…KDLP, NLVN…NNLP, KLQT…TDMP, QLKT…DNLP, KLEK…NDLP, RLSY…KKLP, LLEW…TNFP, SLNY…TELP, SLKE…HDMP, NLRK…DNLP, KLQN…HDLP, SLET…DNLP, ELTY…GDLP, KLEI…GTMD, KLRN…GNLS, NLTE…STLS, RLIY…SNLT, TLQE…SDLD, and NLNK…ANMV. Positions 782-869 constitute an LRRCT domain; that stretch reads TYTLPTVLSY…SAVKVTANAE (88 aa). MucBP domains are found at residues 1507 to 1566, 1572 to 1631, and 1641 to 1702; these read DAAA…EQTV, AIEP…PQTI, and SKKS…SQTV. A disordered region spans residues 1713–1737; sequence SKDEPKVKGKTNQPPSADTKLKVDN. The LPXTG sorting signal motif lies at 1740-1744; the sequence is LPATG. Position 1743 is a pentaglycyl murein peptidoglycan amidated threonine (threonine 1743). The propeptide at 1744-1775 is removed by sortase; sequence GDTENMALAVLIGFNMLLVASIFLFRKPKTNQ.

It belongs to the internalin family.

It localises to the secreted. It is found in the cell wall. Its function is as follows. A role in virulence could not be demonstrated. The chain is Internalin I (inlI) from Listeria monocytogenes serotype 4b (strain F2365).